The primary structure comprises 304 residues: ATP synthase gamma chain (304 aa).

Belongs to the ATPase gamma chain family. As to quaternary structure, F-type ATPases have 2 components, CF(1) - the catalytic core - and CF(0) - the membrane proton channel. CF(1) has five subunits: alpha(3), beta(3), gamma(1), delta(1), epsilon(1). CF(0) has three main subunits: a, b and c.

Its subcellular location is the cell membrane. In terms of biological role, produces ATP from ADP in the presence of a proton gradient across the membrane. The gamma chain is believed to be important in regulating ATPase activity and the flow of protons through the CF(0) complex. This Thermobifida fusca (strain YX) protein is ATP synthase gamma chain.